The chain runs to 304 residues: Secreted mono- and diacylglycerol lipase LIP1 (304 aa).

A signal peptide spans 1–19 (MLFSRFVLLAFGSVAAVSA). Residue T32 is glycosylated (O-linked (Man...) threonine). C57 and C297 are disulfide-bonded. The Nucleophile role is filled by S171. The active site involves D228. N253 is a glycosylation site (N-linked (GlcNAc...) asparagine). H281 is an active-site residue.

Belongs to the AB hydrolase superfamily. Lipase family. Class 3 subfamily.

It is found in the secreted. Its subcellular location is the cell wall. The catalysed reaction is a monoacylglycerol + H2O = glycerol + a fatty acid + H(+). It catalyses the reaction a diacylglycerol + H2O = a monoacylglycerol + a fatty acid + H(+). With respect to regulation, RHC 80267, a well-known inhibitor of diacylglycerol lipases from mammals, also acts as an inhibitor for LIP1/SMG1. Secreted lipase involved in Dandruff and seborrheic dermatitis (D/SD) probably via lipase-mediated breakdown of sebaceous lipids and release of irritating free fatty acids. Shows activity against monoglyceride and diglyceride substrates, but not triglyceride substrates and does not exhibit regio-selective production of diacylglycerols. Able to hydrolyze diacylglycerols such as distearin, dilinolein, dipalmitoylglycerol and dipalmitolein. Cleaves oleic acid from 1,2 isomers of diolein on both the 1 and the 2 position of the glycerol backbone, resulting mainly in free fatty acids but no monoolein is detected. Shows activity on monoolein and liberates mostly free fatty acids, but can also perform the reverse reaction and produce diolein. The protein is Secreted mono- and diacylglycerol lipase LIP1 of Malassezia globosa (strain ATCC MYA-4612 / CBS 7966) (Dandruff-associated fungus).